We begin with the raw amino-acid sequence, 358 residues long: Putative cell-type specific agglutination protein pfl7 (358 aa).

An N-terminal signal peptide occupies residues 1-23; the sequence is MNSLKSLCLKCIVTLCLLVNAFA. N-linked (GlcNAc...) asparagine glycosylation is found at asparagine 67, asparagine 88, asparagine 112, and asparagine 136. The tract at residues 90–144 is disordered; the sequence is TISTSSSTPITASVPTSSSILSNSTIPTTSPVPTTSSTPTSSSILSNSTIPSSSS. 2 consecutive repeat copies span residues 148-180 and 181-218. The 2 X 36 AA approximate tandem repeats stretch occupies residues 148–218; sequence STITTTIISG…GLVEVITPSC (71 aa). The DIPSY domain maps to 207–358; that stretch reads QSGLVEVITP…RADDVILVAY (152 aa). 2 N-linked (GlcNAc...) asparagine glycosylation sites follow: asparagine 245 and asparagine 305.

The protein belongs to the mam3/map4 family.

It localises to the cell surface. In terms of biological role, may be involved in agglutination during conjugation or other aspects of colony formation. Induces flocculation when overexpressed. This Schizosaccharomyces pombe (strain 972 / ATCC 24843) (Fission yeast) protein is Putative cell-type specific agglutination protein pfl7.